The following is a 700-amino-acid chain: Polyribonucleotide nucleotidyltransferase (700 aa).

Mg(2+) contacts are provided by Asp487 and Asp493. In terms of domain architecture, KH spans 554-613 (PRLLTIKIHPDKIRDVIGKGGSTIQAITKDTGTQIDIQDDGTIVIASVNNAAAREAKRRI). Residues 623–691 (GRIYEGKVAK…KQGRIRLSIK (69 aa)) form the S1 motif domain.

Belongs to the polyribonucleotide nucleotidyltransferase family. As to quaternary structure, component of the RNA degradosome, which is a multiprotein complex involved in RNA processing and mRNA degradation. Mg(2+) is required as a cofactor.

Its subcellular location is the cytoplasm. The catalysed reaction is RNA(n+1) + phosphate = RNA(n) + a ribonucleoside 5'-diphosphate. In terms of biological role, involved in mRNA degradation. Catalyzes the phosphorolysis of single-stranded polyribonucleotides processively in the 3'- to 5'-direction. The polypeptide is Polyribonucleotide nucleotidyltransferase (Xylella fastidiosa (strain M12)).